Here is a 221-residue protein sequence, read N- to C-terminus: MEKFEQFKGIVAPLDRANVDTDAIIPKQFLKSIKRSGFGQNLFDEWRYLDYGEPGKDISLRQLNPDFILNQPRYQGARILVARDNFGCGSSREHAPWALQDYGFAVIIAPSFADIFYNNCFKIGLLPIVSEASIVDRLIRDTLETDGYRLEVNLDAQTVTTPSGEIHRFEVDSFRKHCLLNGLDEIGLTLQHADKIRTFEMNRRDRQPWLFLQQNGDKLRT.

This sequence belongs to the LeuD family. LeuD type 1 subfamily. In terms of assembly, heterodimer of LeuC and LeuD.

The catalysed reaction is (2R,3S)-3-isopropylmalate = (2S)-2-isopropylmalate. The protein operates within amino-acid biosynthesis; L-leucine biosynthesis; L-leucine from 3-methyl-2-oxobutanoate: step 2/4. In terms of biological role, catalyzes the isomerization between 2-isopropylmalate and 3-isopropylmalate, via the formation of 2-isopropylmaleate. The sequence is that of 3-isopropylmalate dehydratase small subunit from Nitrosomonas europaea (strain ATCC 19718 / CIP 103999 / KCTC 2705 / NBRC 14298).